The chain runs to 472 residues: Carboxypeptidase Q (472 aa).

Residues 1-20 form the signal peptide; sequence MRFLFFLFVAVVHLFSLGSG. Residues 21-44 constitute a propeptide that is removed on maturation; that stretch reads KAIYKSGVSQRTFQEIKEEIANYE. A glycan (N-linked (GlcNAc...) asparagine) is linked at Asn-61. Zn(2+) contacts are provided by His-290 and Asp-302. Glu-336 (nucleophile) is an active-site residue. Glu-337 is a Zn(2+) binding site. Asn-353 is a glycosylation site (N-linked (GlcNAc...) asparagine). Asp-364 contributes to the Zn(2+) binding site. Residue Asn-396 is glycosylated (N-linked (GlcNAc...) asparagine). Position 434 (His-434) interacts with Zn(2+).

Belongs to the peptidase M28 family. As to quaternary structure, homodimer. The monomeric form is inactive while the homodimer is active. N-glycosylated. The secreted form is modified by hybrid or complex type oligosaccharide chains.

Its subcellular location is the endoplasmic reticulum. The protein resides in the golgi apparatus. It is found in the lysosome. The protein localises to the secreted. Carboxypeptidase that may play an important role in the hydrolysis of circulating peptides. Catalyzes the hydrolysis of dipeptides with unsubstituted terminals into amino acids. May play a role in the liberation of thyroxine hormone from its thyroglobulin (Tg) precursor. The chain is Carboxypeptidase Q (Cpq) from Rattus norvegicus (Rat).